A 1298-amino-acid polypeptide reads, in one-letter code: Activating molecule in BECN1-regulated autophagy protein 1 (1298 aa).

The tract at residues 1–22 is interaction with DDB1; the sequence is MKVVPEKNAVRILWGRERGARA. Lys-45 is covalently cross-linked (Glycyl lysine isopeptide (Lys-Gly) (interchain with G-Cter in ubiquitin)). WD repeat units follow at residues 51-90, 93-133, and 135-175; these read DSPRSTFLLAFSPDRTLLASTHVNHNIYITEVKTGKCVHS, GHRR…ESWF, and DSNN…AVVK. A Phosphoserine; by MTOR modification is found at Ser-52. The segment covering 254–266 has biased composition (polar residues); the sequence is IQVGEQSTVQDSA. A disordered region spans residues 254 to 284; it reads IQVGEQSTVQDSATPSPPPPPPQPSTERPRT. The segment covering 268-277 has biased composition (pro residues); the sequence is PSPPPPPPQP. The PxP motif 1 signature appears at 275–281; sequence PQPSTER. Phosphoserine is present on Ser-328. The segment at 343-413 is disordered; that stretch reads FVQTEPFHPP…SRYHREIAPG (71 aa). A compositionally biased stretch (polar residues) spans 354-385; the sequence is QASSTQQDQGLLNRPSAFSTVQSSTAGNTLRN. Phosphoserine occurs at positions 394 and 443. 3 stretches are compositionally biased toward polar residues: residues 458–467, 547–561, and 590–601; these read SQASVYTSAT, HQPTPHSSENNSNLS, and NYSSGEASSSWQ. Disordered regions lie at residues 458–494, 538–561, 590–690, and 747–796; these read SQASVYTSATEGRGFPASGLATESDGGNGSSQNNSGS, IESERPGPSHQPTPHSSENNSNLS, NYSS…DSLR, and RYQQ…NARM. 2 stretches are compositionally biased toward low complexity: residues 602–614 and 628–639; these read VPSSFESVPSSGS and SSSRLELSSSAS. Phosphoserine occurs at positions 635 and 639. A compositionally biased stretch (polar residues) spans 661–674; that stretch reads YTQSSRSGTVSQEA. Residue Arg-747 is modified to Asymmetric dimethylarginine. Over residues 772–781 the composition is skewed to acidic residues; it reads TDLEFEDFED. The residue at position 1043 (Ser-1043) is a Phosphoserine; by IKKA. The LIR signature appears at 1043–1052; sequence SGVEYYWDQL. The segment covering 1060–1075 has biased composition (polar residues); that stretch reads HSNSRSSERPGTSRAT. A disordered region spans residues 1060–1079; the sequence is HSNSRSSERPGTSRATWRTD. Short sequence motifs (TQT motif) lie at residues 1104-1106 and 1116-1118; these read TQT. 3 disordered regions span residues 1112-1143, 1190-1214, and 1227-1298; these read QNAETQTEREVPEPGTAASGPGEGEGSEYGAS, RSSQTGTEPGAAHTSSPQPSTSRGL, and SPRT…PRNR. Positions 1191-1212 are enriched in polar residues; the sequence is SSQTGTEPGAAHTSSPQPSTSR. Residue Ser-1205 is modified to Phosphoserine. The short motif at 1206–1212 is the PxP motif 2 element; the sequence is PQPSTSR.

It belongs to the WD repeat AMBRA1 family. Component of the DCX(AMBRA1) E3 ubiquitin ligase complex, also named CRL4(AMBRA1), at least composed of CUL4 (CUL4A or CUL4B), DDB1, AMBRA1 and RBX1. Interacts with BECN1. Probably forms a complex with BECN1 and PIK3C3. Interacts with BECN2. Interacts with BCL2; leading to prevent interaction with BCN1 and autophagy, interaction is disrupted upon autophagy induction. Interacts with ULK1. Interacts (via PxP motifs) with PPP2CA; enhancing interaction between PPP2CA and MYC or FOXO3. Forms a complex with PPP2CA and BECN1; AMBRA1 and BECN1 components of the complex regulate MYC stability via different pathways. Interacts (TQT motifs) with DYNLL1 and DYNLL2; tethering AMBRA1 and the BECN1-PIK3C3 complex in absence of autophagy. Interacts with TRAF6; interaction is required to mediate 'Lys-63'-linked ubiquitination of ULK1. Interacts with TRIM32; promoting activation of ULK1 by TRIM32 via unanchored 'Lys-63'-linked polyubiquitin chains. Interacts with PRKN. Interacts (via LIR motif) with LC3 (MAP1LC3A, MAP1LC3B or MAP1LC3C). Interacts with HUWE1. Interacts with PTK2/FAK. Interacts with SRC; required for SRC trafficking to autophagosomes. Phosphorylation at Ser-52 by MTOR inhibits its ability to regulate autophagy and mediate ubiquitination of ULK1. Phosphorylation by ULK1 in response to autophagy induction abolishes interaction with DYNLL1 and DYNLL2, releasing AMBRA1 from the cytoskeletal docking site to induce autophagosome nucleation. Phosphorylation by MTOR inhibits interaction with PPP2CA and subsequent dephosphorylation of MYC. Phosphorylation at Ser-1043 by CHUK/IKKA promotes its interaction with ATG8 family proteins GABARAP and MAP1LC3B and its mitophagic activity. In terms of processing, ubiquitinated by RNF2 via 'Lys-48'-linkage in unstressed cells, leading to its degradation by the proteasome. Induction of autophagy promotes stabilization via interaction with CUL4 (CUL4A or CUL4B) and DDB1. Upon prolonged starvation, ubiquitinated and degraded, terminating the autophagy response. Post-translationally, undergoes proteolytic processing by caspase-6 (CASP6), caspase-7 (CASP7) and caspase-8 (CASP8) during apoptosis, resulting in the dismantling of the autophagic machinery and the accomplishment of the programmed cell death program. Also cleaved by calpains during apoptosis, which mediate a complete proteolytic degradation.

Its subcellular location is the endoplasmic reticulum. The protein localises to the cytoplasm. It localises to the cytoskeleton. The protein resides in the cytoplasmic vesicle. It is found in the autophagosome. Its subcellular location is the mitochondrion. The protein localises to the cytosol. It localises to the nucleus. The protein resides in the cell junction. It is found in the focal adhesion. The protein operates within protein modification; protein ubiquitination. In terms of biological role, substrate-recognition component of a DCX (DDB1-CUL4-X-box) E3 ubiquitin-protein ligase complex involved in cell cycle control and autophagy. The DCX(AMBRA1) complex specifically mediates the polyubiquitination of target proteins such as BECN1, CCND1, CCND2, CCND3, ELOC and ULK1. Acts as an upstream master regulator of the transition from G1 to S cell phase: AMBRA1 specifically recognizes and binds phosphorylated cyclin-D (CCND1, CCND2 and CCND3), leading to cyclin-D ubiquitination by the DCX(AMBRA1) complex and subsequent degradation. By controlling the transition from G1 to S phase and cyclin-D degradation, AMBRA1 acts as a tumor suppressor that promotes genomic integrity during DNA replication and counteracts developmental abnormalities and tumor growth. AMBRA1 also regulates the cell cycle by promoting MYC dephosphorylation and degradation independently of the DCX(AMBRA1) complex: acts via interaction with the catalytic subunit of protein phosphatase 2A (PPP2CA), which enhances interaction between PPP2CA and MYC, leading to MYC dephosphorylation and degradation. Acts as a regulator of Cul5-RING (CRL5) E3 ubiquitin-protein ligase complexes by mediating ubiquitination and degradation of Elongin-C (ELOC) component of CRL5 complexes. Acts as a key regulator of autophagy by modulating the BECN1-PIK3C3 complex: controls protein turnover during neuronal development, and regulates normal cell survival and proliferation. In normal conditions, AMBRA1 is tethered to the cytoskeleton via interaction with dyneins DYNLL1 and DYNLL2. Upon autophagy induction, AMBRA1 is released from the cytoskeletal docking site to induce autophagosome nucleation by mediating ubiquitination of proteins involved in autophagy. The DCX(AMBRA1) complex mediates 'Lys-63'-linked ubiquitination of BECN1, increasing the association between BECN1 and PIK3C3 to promote PIK3C3 activity. In collaboration with TRAF6, AMBRA1 mediates 'Lys-63'-linked ubiquitination of ULK1 following autophagy induction, promoting ULK1 stability and kinase activity. Also activates ULK1 via interaction with TRIM32: TRIM32 stimulates ULK1 through unanchored 'Lys-63'-linked polyubiquitin chains. Also acts as an activator of mitophagy via interaction with PRKN and LC3 proteins (MAP1LC3A, MAP1LC3B or MAP1LC3C); possibly by bringing damaged mitochondria onto autophagosomes. Also activates mitophagy by acting as a cofactor for HUWE1; acts by promoting HUWE1-mediated ubiquitination of MFN2. AMBRA1 is also involved in regulatory T-cells (Treg) differentiation by promoting FOXO3 dephosphorylation independently of the DCX(AMBRA1) complex: acts via interaction with PPP2CA, which enhances interaction between PPP2CA and FOXO3, leading to FOXO3 dephosphorylation and stabilization. May act as a regulator of intracellular trafficking, regulating the localization of active PTK2/FAK and SRC. Also involved in transcription regulation by acting as a scaffold for protein complexes at chromatin. The protein is Activating molecule in BECN1-regulated autophagy protein 1 of Homo sapiens (Human).